The primary structure comprises 511 residues: Lariat debranching enzyme (511 aa).

A divalent metal cation is bound by residues Cys-52, His-54, Asp-83, and Asn-128. Residues 168 to 198 form a lariat recognition loop region; that stretch reads SGIYSHGDVEFSHYERPAFAERDVKSAYHVR. Residues His-226, His-278, and His-280 each contribute to the a divalent metal cation site. Residues 473-511 form a disordered region; that stretch reads EDDFIIDRGHGSEEPEAKKSRLEEEKKKKKKKIENLKTL. The segment covering 477 to 498 has biased composition (basic and acidic residues); it reads IIDRGHGSEEPEAKKSRLEEEK.

The protein belongs to the lariat debranching enzyme family. The cofactor is Fe(2+). It depends on Zn(2+) as a cofactor. Mn(2+) is required as a cofactor.

The protein resides in the nucleus. With respect to regulation, active in presence of diverse metals including Fe(2+), Zn(2+), Mn(2+). Binds two metal cations in two adjacent alpha and beta metal-binding pockets. In terms of biological role, cleaves the 2'-5' phosphodiester linkage at the branch point of lariat intron pre-mRNAs after splicing and converts them into linear molecules that are subsequently degraded. It thereby facilitates ribonucleotide turnover. The sequence is that of Lariat debranching enzyme (dbr-1) from Caenorhabditis briggsae.